The primary structure comprises 252 residues: F-box/SPRY domain-containing protein 1 (252 aa).

The F-box domain maps to 1–48; it reads MVDPLCNYNVLEAIFSYLELNDLYRCSQVCKSWYHFLNDENSDVWRWH. Residues 58–250 form the B30.2/SPRY domain; that stretch reads VKSDLLASVS…VSMVYLGTPL (193 aa).

The protein belongs to the FBXO45/Fsn family. In terms of assembly, component of an E3 ubiquitin ligase complex composed of hiw and Fsn.

The protein localises to the synapse. It functions in the pathway protein modification; protein ubiquitination. Its function is as follows. Required in the presynaptic motoneuron to down-regulate the levels of wnd and restrain synaptic terminal growth at the neuromuscular junction (NMJ). In Drosophila virilis (Fruit fly), this protein is F-box/SPRY domain-containing protein 1.